Consider the following 116-residue polypeptide: Large ribosomal subunit protein bL19 (116 aa).

This sequence belongs to the bacterial ribosomal protein bL19 family.

Its function is as follows. This protein is located at the 30S-50S ribosomal subunit interface and may play a role in the structure and function of the aminoacyl-tRNA binding site. The polypeptide is Large ribosomal subunit protein bL19 (Pseudothermotoga lettingae (strain ATCC BAA-301 / DSM 14385 / NBRC 107922 / TMO) (Thermotoga lettingae)).